The following is a 99-amino-acid chain: Duplicate procyclin (99 aa).

This is Duplicate procyclin from Trypanosoma brucei brucei.